A 377-amino-acid chain; its full sequence is uncharacterized protein (377 aa).

Transmembrane regions (helical) follow at residues Leu-23 to Tyr-43 and Gly-251 to Tyr-271.

Its subcellular location is the cell membrane. This is an uncharacterized protein from Methanocaldococcus jannaschii (strain ATCC 43067 / DSM 2661 / JAL-1 / JCM 10045 / NBRC 100440) (Methanococcus jannaschii).